A 975-amino-acid chain; its full sequence is Importin-11 (975 aa).

Methionine 1 is subject to N-acetylmethionine. One can recognise an Importin N-terminal domain in the interval 28–100 (AEEQLKQWET…RAGLITNFNE (73 aa)). HEAT repeat units lie at residues 123-160 (RQWP…TLAS), 209-248 (ERTL…RLKQ), 318-356 (VQCM…KMAF), 422-459 (QTLT…AVGL), 473-509 (WFKN…VKFK), 511-548 (DLRP…DFEF), 555-593 (PYLE…RVNM), 600-636 (GCLV…GLGA), 640-677 (NLYP…TLEN), 683-720 (PELL…SSTE), 743-764 (EGQV…ILGP), 765-804 (QMFQ…QNTS), 819-849 (QEMD…KLSA), 850-887 (LALL…EDPE), and 957-974 (METV…FLQG). At serine 343 the chain carries Phosphoserine.

This sequence belongs to the importin beta family. Interacts with UBE2E3 and RPL12.

Its subcellular location is the cytoplasm. The protein localises to the nucleus. Functionally, functions in nuclear protein import as nuclear transport receptor. Serves as receptor for nuclear localization signals (NLS) in cargo substrates. Is thought to mediate docking of the importin/substrate complex to the nuclear pore complex (NPC) through binding to nucleoporin and the complex is subsequently translocated through the pore by an energy requiring, Ran-dependent mechanism. At the nucleoplasmic side of the NPC, Ran binds to the importin, the importin/substrate complex dissociates and importin is re-exported from the nucleus to the cytoplasm where GTP hydrolysis releases Ran. The directionality of nuclear import is thought to be conferred by an asymmetric distribution of the GTP- and GDP-bound forms of Ran between the cytoplasm and nucleus. Mediates the nuclear import of UBE2E3, and of RPL12. This chain is Importin-11 (IPO11), found in Homo sapiens (Human).